Reading from the N-terminus, the 359-residue chain is MRQILIAVGLALAVSILLTPVLIRLFTRQGFGHEIREDGPPTHHKKRGTPSMGGVAILAGIWVSYLGTHLVGLALDGEGPSASGLLVLGLATALGIVGFIDDLIKIRRARNLGLNKTAKTVGILAAALLFGVLALQFGNADGLTPGSPELSYVREIATVTLAPLIFVLFCVVLVSAWSNAVNFTDGLDGLAAGAMAMVCAAYVLITFWQYRNACATSPGLGCYNVRDPLDLALVAAAAAGACIGFLWWNAAPAKIFMGDTGSLALGGIIAGLSVTSRTEILAVVLGALFVAEVTSVVVQILAFRTTGRRVFRMAPFHHHFELVGWAETTVIIRFWLLTAIACGLGVALFYGEWLTAVGA.

Transmembrane regions (helical) follow at residues 3–23 (QILI…PVLI), 55–75 (VAIL…GLAL), 84–104 (GLLV…DDLI), 120–140 (TVGI…FGNA), 156–176 (IATV…LVSA), 187–207 (LDGL…LITF), 231–251 (LALV…WNAA), 255–275 (IFMG…LSVT), 280–300 (ILAV…VVQI), and 334–354 (FWLL…GEWL).

Belongs to the glycosyltransferase 4 family. MraY subfamily. Mg(2+) serves as cofactor.

The protein resides in the cell membrane. It catalyses the reaction UDP-N-acetyl-alpha-D-muramoyl-L-alanyl-gamma-D-glutamyl-meso-2,6-diaminopimeloyl-D-alanyl-D-alanine + di-trans,octa-cis-undecaprenyl phosphate = di-trans,octa-cis-undecaprenyl diphospho-N-acetyl-alpha-D-muramoyl-L-alanyl-D-glutamyl-meso-2,6-diaminopimeloyl-D-alanyl-D-alanine + UMP. Its pathway is cell wall biogenesis; peptidoglycan biosynthesis. Its function is as follows. Catalyzes the initial step of the lipid cycle reactions in the biosynthesis of the cell wall peptidoglycan: transfers peptidoglycan precursor phospho-MurNAc-pentapeptide from UDP-MurNAc-pentapeptide onto the lipid carrier undecaprenyl phosphate, yielding undecaprenyl-pyrophosphoryl-MurNAc-pentapeptide, known as lipid I. In Mycobacterium sp. (strain JLS), this protein is Phospho-N-acetylmuramoyl-pentapeptide-transferase.